The following is a 215-amino-acid chain: LexA repressor (215 aa).

Positions 28-48 (RAEIAAELGFSSPNAAEEHLR) form a DNA-binding region, H-T-H motif. Active-site for autocatalytic cleavage activity residues include S133 and K170.

It belongs to the peptidase S24 family. In terms of assembly, homodimer.

The enzyme catalyses Hydrolysis of Ala-|-Gly bond in repressor LexA.. Functionally, represses a number of genes involved in the response to DNA damage (SOS response), including recA and lexA. In the presence of single-stranded DNA, RecA interacts with LexA causing an autocatalytic cleavage which disrupts the DNA-binding part of LexA, leading to derepression of the SOS regulon and eventually DNA repair. In Burkholderia mallei (strain NCTC 10247), this protein is LexA repressor.